Here is a 263-residue protein sequence, read N- to C-terminus: Hydroxyethylthiazole kinase 1 (263 aa).

Met42 provides a ligand contact to substrate. Residues Lys118 and Thr164 each contribute to the ATP site. Gly191 is a substrate binding site.

This sequence belongs to the Thz kinase family. The cofactor is Mg(2+).

It catalyses the reaction 5-(2-hydroxyethyl)-4-methylthiazole + ATP = 4-methyl-5-(2-phosphooxyethyl)-thiazole + ADP + H(+). It functions in the pathway cofactor biosynthesis; thiamine diphosphate biosynthesis; 4-methyl-5-(2-phosphoethyl)-thiazole from 5-(2-hydroxyethyl)-4-methylthiazole: step 1/1. In terms of biological role, catalyzes the phosphorylation of the hydroxyl group of 4-methyl-5-beta-hydroxyethylthiazole (THZ). The polypeptide is Hydroxyethylthiazole kinase 1 (Clostridium botulinum (strain Langeland / NCTC 10281 / Type F)).